The chain runs to 210 residues: Cell division protein SepF (210 aa).

The tract at residues 13 to 101 (GLADGDEYDE…EPVDPGYRAP (89 aa)) is disordered. 2 stretches are compositionally biased toward basic and acidic residues: residues 22-70 (EQPR…ERPE) and 83-93 (VEPRRPARPEP).

The protein belongs to the SepF family. As to quaternary structure, homodimer. Interacts with FtsZ.

It localises to the cytoplasm. Its function is as follows. Cell division protein that is part of the divisome complex and is recruited early to the Z-ring. Probably stimulates Z-ring formation, perhaps through the cross-linking of FtsZ protofilaments. Its function overlaps with FtsA. The protein is Cell division protein SepF of Micrococcus luteus (strain ATCC 4698 / DSM 20030 / JCM 1464 / CCM 169 / CCUG 5858 / IAM 1056 / NBRC 3333 / NCIMB 9278 / NCTC 2665 / VKM Ac-2230) (Micrococcus lysodeikticus).